Here is a 451-residue protein sequence, read N- to C-terminus: Phosphoglucosamine mutase (451 aa).

S101 acts as the Phosphoserine intermediate in catalysis. Mg(2+)-binding residues include S101, D240, D242, and D244. S101 carries the post-translational modification Phosphoserine.

This sequence belongs to the phosphohexose mutase family. Requires Mg(2+) as cofactor. In terms of processing, activated by phosphorylation.

The catalysed reaction is alpha-D-glucosamine 1-phosphate = D-glucosamine 6-phosphate. In terms of biological role, catalyzes the conversion of glucosamine-6-phosphate to glucosamine-1-phosphate. This Streptococcus pyogenes serotype M18 (strain MGAS8232) protein is Phosphoglucosamine mutase.